Here is a 122-residue protein sequence, read N- to C-terminus: uncharacterized protein (122 aa).

A signal peptide spans 1–33; that stretch reads MASTVAGLSMSAESLRLPLLIGVSSGMLSVSDA.

This is an uncharacterized protein from Saccharomyces cerevisiae (strain ATCC 204508 / S288c) (Baker's yeast).